The sequence spans 382 residues: Methylthioribose-1-phosphate isomerase (382 aa).

Asp-257 (proton donor) is an active-site residue.

It belongs to the eIF-2B alpha/beta/delta subunits family. MtnA subfamily.

The protein resides in the cytoplasm. Its subcellular location is the nucleus. The catalysed reaction is 5-(methylsulfanyl)-alpha-D-ribose 1-phosphate = 5-(methylsulfanyl)-D-ribulose 1-phosphate. The protein operates within amino-acid biosynthesis; L-methionine biosynthesis via salvage pathway; L-methionine from S-methyl-5-thio-alpha-D-ribose 1-phosphate: step 1/6. Catalyzes the interconversion of methylthioribose-1-phosphate (MTR-1-P) into methylthioribulose-1-phosphate (MTRu-1-P). This chain is Methylthioribose-1-phosphate isomerase, found in Paracoccidioides brasiliensis (strain Pb18).